Consider the following 843-residue polypeptide: Taste receptor type 1 member 2 (843 aa).

The N-terminal stretch at 1–19 is a signal peptide; it reads MGPQARTLHLLFLLLHALP. Over 20 to 570 the chain is Extracellular; it reads KPVMLVGNSD…AFLEWHEVPT (551 aa). Asparagine 87, asparagine 296, asparagine 316, asparagine 355, asparagine 372, asparagine 432, asparagine 484, asparagine 491, and asparagine 531 each carry an N-linked (GlcNAc...) asparagine glycan. A helical transmembrane segment spans residues 571 to 591; sequence IVVTILAALGFISTLAILLIF. Topologically, residues 592 to 606 are cytoplasmic; it reads WRHFQTPMVRSAGGP. A helical membrane pass occupies residues 607–627; sequence MCFLMLVPLLLAFGMVPVYVG. Over 628 to 642 the chain is Extracellular; that stretch reads PPTVFSCFCRQAFFT. The helical transmembrane segment at 643–663 threads the bilayer; sequence VCFSVCLSCITVRSFQIVCVF. Over 664–682 the chain is Cytoplasmic; sequence KMARRLPSAYGFWMRYHGP. The chain crosses the membrane as a helical span at residues 683-703; that stretch reads YVFVAFITAVKVALVAGNMLA. Over 704–731 the chain is Extracellular; sequence TTINPIGRTDPDDPNIIILSCHPNYRNG. A helical transmembrane segment spans residues 732–752; the sequence is LLFNTSMDLLLSVLGFSFAYV. Residues 753–764 lie on the Cytoplasmic side of the membrane; it reads GKELPTNYNEAK. A helical transmembrane segment spans residues 765–785; the sequence is FITLSMTFSFTSSISLCTFMS. Residues 786 to 789 lie on the Extracellular side of the membrane; it reads VHDG. The helical transmembrane segment at 790–810 threads the bilayer; the sequence is VLVTIMDLLVTVLNFLAIGLG. Topologically, residues 811–843 are cytoplasmic; sequence YFGPKCYMILFYPERNTSAYFNSMIQGYTMRKS.

Belongs to the G-protein coupled receptor 3 family. TAS1R subfamily. Forms heterodimers with TAS1R3. Expressed mainly in circumvallate and foliate taste papillae.

It is found in the cell membrane. In terms of biological role, putative taste receptor. TAS1R2/TAS1R3 recognizes diverse natural and synthetic sweeteners. This Mus musculus (Mouse) protein is Taste receptor type 1 member 2 (Tas1r2).